The primary structure comprises 467 residues: Chromosomal replication initiator protein DnaA (467 aa).

A domain I, interacts with DnaA modulators region spans residues Met1–Ser80. The interval Ser80–Ser130 is domain II. The segment at Tyr131 to Ala347 is domain III, AAA+ region. Gly175, Gly177, Lys178, and Thr179 together coordinate ATP. A domain IV, binds dsDNA region spans residues His348–Ser467.

It belongs to the DnaA family. In terms of assembly, oligomerizes as a right-handed, spiral filament on DNA at oriC.

The protein resides in the cytoplasm. In terms of biological role, plays an essential role in the initiation and regulation of chromosomal replication. ATP-DnaA binds to the origin of replication (oriC) to initiate formation of the DNA replication initiation complex once per cell cycle. Binds the DnaA box (a 9 base pair repeat at the origin) and separates the double-stranded (ds)DNA. Forms a right-handed helical filament on oriC DNA; dsDNA binds to the exterior of the filament while single-stranded (ss)DNA is stabiized in the filament's interior. The ATP-DnaA-oriC complex binds and stabilizes one strand of the AT-rich DNA unwinding element (DUE), permitting loading of DNA polymerase. After initiation quickly degrades to an ADP-DnaA complex that is not apt for DNA replication. Binds acidic phospholipids. This is Chromosomal replication initiator protein DnaA from Hahella chejuensis (strain KCTC 2396).